Consider the following 857-residue polypeptide: Bifunctional uridylyltransferase/uridylyl-removing enzyme (857 aa).

A uridylyltransferase region spans residues 1–322 (MDTTPELLLC…FPSESMVTRE (322 aa)). Residues 323–679 (INDRFVERQG…ARISPAGEGL (357 aa)) are uridylyl-removing. The HD domain occupies 441–563 (VDQHILMVVR…VGNGRYLTAL (123 aa)). ACT domains lie at 680-760 (QVAV…DPTQ) and 788-857 (LLSV…ALAI).

This sequence belongs to the GlnD family. The cofactor is Mg(2+).

The enzyme catalyses [protein-PII]-L-tyrosine + UTP = [protein-PII]-uridylyl-L-tyrosine + diphosphate. The catalysed reaction is [protein-PII]-uridylyl-L-tyrosine + H2O = [protein-PII]-L-tyrosine + UMP + H(+). Uridylyltransferase (UTase) activity is inhibited by glutamine, while glutamine activates uridylyl-removing (UR) activity. Modifies, by uridylylation and deuridylylation, the PII regulatory proteins (GlnB and homologs), in response to the nitrogen status of the cell that GlnD senses through the glutamine level. Under low glutamine levels, catalyzes the conversion of the PII proteins and UTP to PII-UMP and PPi, while under higher glutamine levels, GlnD hydrolyzes PII-UMP to PII and UMP (deuridylylation). Thus, controls uridylylation state and activity of the PII proteins, and plays an important role in the regulation of nitrogen assimilation and metabolism. This is Bifunctional uridylyltransferase/uridylyl-removing enzyme from Cupriavidus metallidurans (strain ATCC 43123 / DSM 2839 / NBRC 102507 / CH34) (Ralstonia metallidurans).